Consider the following 283-residue polypeptide: (+)-O-methylkolavelool synthase (283 aa).

S-adenosyl-L-methionine is bound by residues Gln106, 129-130 (NA), and His151.

It belongs to the methyltransferase superfamily.

It catalyses the reaction (+)-kolavelool + S-adenosyl-L-methionine = (+)-O-methylkolavelool + S-adenosyl-L-homocysteine + H(+). Its function is as follows. Involved in the biosynthesis of the diterpene (+)-O-methylkolavelool. Catalyzes the transfer of a methyl group from S-adenosyl-L-methionine to the hydroxy group of (+)-kolavelool, forming (+)-O-methylkolavelool. This chain is (+)-O-methylkolavelool synthase, found in Herpetosiphon aurantiacus (strain ATCC 23779 / DSM 785 / 114-95).